The following is a 400-amino-acid chain: Argininosuccinate synthase (400 aa).

Residue 8–16 participates in ATP binding; it reads AYSGGLDTS. Residues tyrosine 87 and serine 92 each coordinate L-citrulline. Position 117 (glycine 117) interacts with ATP. Residues threonine 119, asparagine 123, and aspartate 124 each contribute to the L-aspartate site. Asparagine 123 provides a ligand contact to L-citrulline. Residues arginine 127, serine 175, glutamate 259, and tyrosine 271 each contribute to the L-citrulline site.

This sequence belongs to the argininosuccinate synthase family. Type 1 subfamily. As to quaternary structure, homotetramer.

It localises to the cytoplasm. The catalysed reaction is L-citrulline + L-aspartate + ATP = 2-(N(omega)-L-arginino)succinate + AMP + diphosphate + H(+). It participates in amino-acid biosynthesis; L-arginine biosynthesis; L-arginine from L-ornithine and carbamoyl phosphate: step 2/3. The polypeptide is Argininosuccinate synthase (Parafrankia sp. (strain EAN1pec)).